The primary structure comprises 442 residues: D-serine dehydratase (442 aa).

Residue Lys118 is modified to N6-(pyridoxal phosphate)lysine.

Belongs to the serine/threonine dehydratase family. DsdA subfamily. In terms of assembly, monomer. The cofactor is pyridoxal 5'-phosphate.

The catalysed reaction is D-serine = pyruvate + NH4(+). This is D-serine dehydratase from Shigella flexneri serotype 5b (strain 8401).